Reading from the N-terminus, the 525-residue chain is Bifunctional purine biosynthesis protein PurH (525 aa).

The 147-residue stretch at 1–147 folds into the MGS-like domain; sequence MTKIERALIS…KNWAHVAIVT (147 aa).

It belongs to the PurH family.

The catalysed reaction is (6R)-10-formyltetrahydrofolate + 5-amino-1-(5-phospho-beta-D-ribosyl)imidazole-4-carboxamide = 5-formamido-1-(5-phospho-D-ribosyl)imidazole-4-carboxamide + (6S)-5,6,7,8-tetrahydrofolate. The enzyme catalyses IMP + H2O = 5-formamido-1-(5-phospho-D-ribosyl)imidazole-4-carboxamide. It participates in purine metabolism; IMP biosynthesis via de novo pathway; 5-formamido-1-(5-phospho-D-ribosyl)imidazole-4-carboxamide from 5-amino-1-(5-phospho-D-ribosyl)imidazole-4-carboxamide (10-formyl THF route): step 1/1. The protein operates within purine metabolism; IMP biosynthesis via de novo pathway; IMP from 5-formamido-1-(5-phospho-D-ribosyl)imidazole-4-carboxamide: step 1/1. This is Bifunctional purine biosynthesis protein PurH from Chromobacterium violaceum (strain ATCC 12472 / DSM 30191 / JCM 1249 / CCUG 213 / NBRC 12614 / NCIMB 9131 / NCTC 9757 / MK).